The sequence spans 443 residues: MEGYWAVLFPVLKVWFSCVIVLIMLPAMFGISLGITETYMKLLIKTLEWATHRIQRASRAEEILKESASNGLIQRDNSSLEQEIEELRRNRPKSADRGDFTLSDVLYFSRKGFESIVEDDVTQRFTSEELVSWNLLTRTNNNFQYISLRLTVLWVVGVVVRYCILLPLRITLTTIGLTWLVIGTTTVGFLPNCRVKNWLSELVHLMCYRICARGLSATIHFHNKQNRPKKGGICVANHTSPIDVVILANDGCYAMVGQVHGGLMGVLQRAMERSCPHIWFERSEMRDRHLVTQRLKDHVNAKTKLPILIFPEGTCINNTSVMMFKKGSFEIGGTIYPVAIKYDPQFGDAFWNSSKYSIMSYLLRMMTSWAIVCNVWYLPPMTHEEGEDAVQFANRVKSTIAQQGGLVDLAWDGGLKRAKVKDSFKEQQQKKYSHMVVGEDSSD.

Transmembrane regions (helical) follow at residues 15–35 (WFSCVIVLIMLPAMFGISLGI), 146–166 (ISLRLTVLWVVGVVVRYCILL), and 170–190 (ITLTTIGLTWLVIGTTTVGFL). The short motif at 238–243 (HTSPID) is the HXXXXD motif element. A helical transmembrane segment spans residues 358 to 378 (IMSYLLRMMTSWAIVCNVWYL).

It belongs to the 1-acyl-sn-glycerol-3-phosphate acyltransferase family.

The protein localises to the endoplasmic reticulum membrane. It carries out the reaction sn-glycerol 3-phosphate + an acyl-CoA = a 1-acyl-sn-glycero-3-phosphate + CoA. It catalyses the reaction a 1-acyl-sn-glycero-3-phosphate + an acyl-CoA = a 1,2-diacyl-sn-glycero-3-phosphate + CoA. The protein operates within glycerolipid metabolism; triacylglycerol biosynthesis. Its pathway is phospholipid metabolism; CDP-diacylglycerol biosynthesis; CDP-diacylglycerol from sn-glycerol 3-phosphate: step 1/3. May transfer the acyl-group from acyl-coA to the sn-1 position of glycerol-3-phosphate, an essential step in glycerolipid biosynthesis. Also transfers the acyl-group from acyl-coA to the sn-2 position of 1-acyl-sn-glycerol-3-phosphate (lysophosphatidic acid, or LPA), forming 1,2-diacyl-sn-glycerol-3-phosphate (phosphatidic acid, or PA). The protein is Glycerol-3-phosphate acyltransferase 3-like (agpat9l) of Danio rerio (Zebrafish).